Reading from the N-terminus, the 188-residue chain is Photosystem I assembly protein Ycf4 (188 aa).

The next 2 helical transmembrane spans lie at 22-42 (LGWA…GLSS) and 68-88 (LVMC…WCAI).

Belongs to the Ycf4 family.

Its subcellular location is the plastid. It is found in the chloroplast thylakoid membrane. In terms of biological role, seems to be required for the assembly of the photosystem I complex. This is Photosystem I assembly protein Ycf4 from Zygnema circumcarinatum (Green alga).